Here is a 240-residue protein sequence, read N- to C-terminus: MKDLQKKSSVRRQITNEDDERYGEDSIHDLPRTIPNVNPYIRNSGFRPSYSSQIPSTRSLFNNYYNRSSANTVGNDTIDTDSVSYNGVAKFRRNSVDIPLQTHNRLEVRPIIDRQDYLWREIDALDDVKRQAQATELYDQFPPGFENKLMQLRQAHSKLLQVLRDRNAKIEEEQRREVAVATAAAMMTRTPSPTGKSVGDEATSNNMHSSSAIRNPNGPTVDPEEGKYIQELVNTIRELQ.

The disordered stretch occupies residues 1–27 (MKDLQKKSSVRRQITNEDDERYGEDSI). Phosphoserine occurs at positions 59 and 95. The segment at 189-227 (RTPSPTGKSVGDEATSNNMHSSSAIRNPNGPTVDPEEGK) is disordered. Positions 202–218 (ATSNNMHSSSAIRNPNG) are enriched in polar residues.

This is an uncharacterized protein from Saccharomyces cerevisiae (strain ATCC 204508 / S288c) (Baker's yeast).